Reading from the N-terminus, the 395-residue chain is Imidazolonepropionase (395 aa).

His63 and His65 together coordinate Fe(3+). His63 and His65 together coordinate Zn(2+). Positions 72, 135, and 168 each coordinate 4-imidazolone-5-propanoate. Tyr135 provides a ligand contact to N-formimidoyl-L-glutamate. Position 233 (His233) interacts with Fe(3+). A Zn(2+)-binding site is contributed by His233. Gln236 contributes to the 4-imidazolone-5-propanoate binding site. Asp308 contributes to the Fe(3+) binding site. Asp308 is a binding site for Zn(2+). The N-formimidoyl-L-glutamate site is built by Asn310 and Gly312. Thr313 is a binding site for 4-imidazolone-5-propanoate.

The protein belongs to the metallo-dependent hydrolases superfamily. HutI family. Zn(2+) serves as cofactor. The cofactor is Fe(3+).

Its subcellular location is the cytoplasm. The enzyme catalyses 4-imidazolone-5-propanoate + H2O = N-formimidoyl-L-glutamate. Its pathway is amino-acid degradation; L-histidine degradation into L-glutamate; N-formimidoyl-L-glutamate from L-histidine: step 3/3. Functionally, catalyzes the hydrolytic cleavage of the carbon-nitrogen bond in imidazolone-5-propanoate to yield N-formimidoyl-L-glutamate. It is the third step in the universal histidine degradation pathway. The sequence is that of Imidazolonepropionase from Cereibacter sphaeroides (strain KD131 / KCTC 12085) (Rhodobacter sphaeroides).